Here is a 37-residue protein sequence, read N- to C-terminus: Large ribosomal subunit protein bL36 (37 aa).

It belongs to the bacterial ribosomal protein bL36 family.

This is Large ribosomal subunit protein bL36 from Nostoc sp. (strain PCC 7120 / SAG 25.82 / UTEX 2576).